Consider the following 53-residue polypeptide: UPF0391 membrane protein ETA_06630 (53 aa).

A run of 2 helical transmembrane segments spans residues 4–24 (WGIIFLVIALIAAALGFGGLA) and 27–47 (AAWAAKVVFVVGIVIFLISLF).

Belongs to the UPF0391 family.

The protein resides in the cell membrane. The protein is UPF0391 membrane protein ETA_06630 of Erwinia tasmaniensis (strain DSM 17950 / CFBP 7177 / CIP 109463 / NCPPB 4357 / Et1/99).